Reading from the N-terminus, the 663-residue chain is UvrABC system protein B (663 aa).

The region spanning aspartate 26–arginine 183 is the Helicase ATP-binding domain. Glycine 39–threonine 46 contacts ATP. The Beta-hairpin signature appears at tyrosine 92 to isoleucine 115. In terms of domain architecture, Helicase C-terminal spans glutamine 430–leucine 596. The region spanning alanine 624 to glutamine 659 is the UVR domain.

It belongs to the UvrB family. As to quaternary structure, forms a heterotetramer with UvrA during the search for lesions. Interacts with UvrC in an incision complex.

It is found in the cytoplasm. Functionally, the UvrABC repair system catalyzes the recognition and processing of DNA lesions. A damage recognition complex composed of 2 UvrA and 2 UvrB subunits scans DNA for abnormalities. Upon binding of the UvrA(2)B(2) complex to a putative damaged site, the DNA wraps around one UvrB monomer. DNA wrap is dependent on ATP binding by UvrB and probably causes local melting of the DNA helix, facilitating insertion of UvrB beta-hairpin between the DNA strands. Then UvrB probes one DNA strand for the presence of a lesion. If a lesion is found the UvrA subunits dissociate and the UvrB-DNA preincision complex is formed. This complex is subsequently bound by UvrC and the second UvrB is released. If no lesion is found, the DNA wraps around the other UvrB subunit that will check the other stand for damage. The polypeptide is UvrABC system protein B (Legionella pneumophila (strain Corby)).